The following is a 391-amino-acid chain: UPF0229 protein CA_C0580 (391 aa).

Disordered regions lie at residues 1–20 and 75–109; these read MAIF…TIGD and VGSG…NSEG. The span at 96–106 shows a compositional bias: gly residues; the sequence is GSKGKGKGAGN.

This sequence belongs to the UPF0229 family.

The polypeptide is UPF0229 protein CA_C0580 (Clostridium acetobutylicum (strain ATCC 824 / DSM 792 / JCM 1419 / IAM 19013 / LMG 5710 / NBRC 13948 / NRRL B-527 / VKM B-1787 / 2291 / W)).